A 275-amino-acid chain; its full sequence is Polyamine aminopropyltransferase (275 aa).

Residues 2 to 235 enclose the PABS domain; it reads ELWFTEKQTK…GLWTFTIGSK (234 aa). Gln31 lines the S-methyl-5'-thioadenosine pocket. Spermidine contacts are provided by His62 and Asp86. Residues Glu106 and 137–138 contribute to the S-methyl-5'-thioadenosine site; that span reads DG. The active-site Proton acceptor is the Asp155. 155–158 contributes to the spermidine binding site; it reads DSTE. Residue Pro162 coordinates S-methyl-5'-thioadenosine.

This sequence belongs to the spermidine/spermine synthase family. As to quaternary structure, homodimer or homotetramer.

The protein resides in the cytoplasm. The enzyme catalyses S-adenosyl 3-(methylsulfanyl)propylamine + putrescine = S-methyl-5'-thioadenosine + spermidine + H(+). It participates in amine and polyamine biosynthesis; spermidine biosynthesis; spermidine from putrescine: step 1/1. Functionally, catalyzes the irreversible transfer of a propylamine group from the amino donor S-adenosylmethioninamine (decarboxy-AdoMet) to putrescine (1,4-diaminobutane) to yield spermidine. This Bacillus cereus (strain ATCC 10987 / NRS 248) protein is Polyamine aminopropyltransferase.